The following is a 542-amino-acid chain: Probable quinate permease (542 aa).

Topologically, residues Met-1–Tyr-22 are cytoplasmic. Residues Leu-23–Gly-43 form a helical membrane-spanning segment. At Thr-44–Asn-66 the chain is on the extracellular side. Residues Leu-67 to Ala-87 traverse the membrane as a helical segment. The Cytoplasmic portion of the chain corresponds to Tyr-88 to Lys-97. A helical membrane pass occupies residues Trp-98–Asp-118. Over Gly-119–Arg-130 the chain is Extracellular. A helical transmembrane segment spans residues Val-131 to Met-151. At Ala-152–Arg-159 the chain is on the cytoplasmic side. The helical transmembrane segment at Leu-160–Tyr-180 threads the bilayer. The Extracellular portion of the chain corresponds to Gly-181–Trp-193. The chain crosses the membrane as a helical span at residues Ile-194–Leu-214. Residues Lys-215–Arg-285 are Cytoplasmic-facing. The chain crosses the membrane as a helical span at residues Leu-286–Tyr-306. The Extracellular portion of the chain corresponds to Tyr-307 to Phe-325. The helical transmembrane segment at Ser-326–Ile-346 threads the bilayer. At Asp-347–Arg-352 the chain is on the cytoplasmic side. Residues Leu-353–Ile-373 traverse the membrane as a helical segment. Topologically, residues Lys-374–Thr-387 are extracellular. The helical transmembrane segment at Gly-388–Trp-408 threads the bilayer. Over Asn-409–Tyr-456 the chain is Cytoplasmic. The chain crosses the membrane as a helical span at residues Gly-457 to Leu-477. Over Pro-478–Val-542 the chain is Extracellular. The interval Ile-519–Val-542 is disordered. Residues Gln-531–Val-542 are compositionally biased toward basic and acidic residues.

This sequence belongs to the major facilitator superfamily. Sugar transporter (TC 2.A.1.1) family. As to quaternary structure, interacts with creB. Ubiquitinated. Deubiquitinated by creB, probably to control its activity or amount.

It is found in the cell membrane. Its function is as follows. Integral membrane transporter that imports quinic acid to be catabolized as a carbon source. This is Probable quinate permease (qutD) from Neosartorya fischeri (strain ATCC 1020 / DSM 3700 / CBS 544.65 / FGSC A1164 / JCM 1740 / NRRL 181 / WB 181) (Aspergillus fischerianus).